A 188-amino-acid chain; its full sequence is Putative protein SSX9 (188 aa).

One can recognise a KRAB-related domain in the interval 20 to 83 (KIQKAFDDIA…TGATDLQGND (64 aa)). Residues 114–165 (KKPAEVGNDSKEVPEASGLQNDGKQLCPPGKPTTSEKINKASGPKRGKHAWT) are disordered. Positions 115–127 (KPAEVGNDSKEVP) are enriched in basic and acidic residues. Serine 123 is modified (phosphoserine). The span at 156–165 (GPKRGKHAWT) shows a compositional bias: basic residues.

This sequence belongs to the SSX family. In terms of tissue distribution, not detected in any normal or tumor tissues.

Could act as a modulator of transcription. This chain is Putative protein SSX9, found in Homo sapiens (Human).